A 228-amino-acid chain; its full sequence is tRNA (guanine-N(1)-)-methyltransferase (228 aa).

S-adenosyl-L-methionine is bound by residues Gly108 and 127 to 132 (VGDFIL).

This sequence belongs to the RNA methyltransferase TrmD family. As to quaternary structure, homodimer.

It is found in the cytoplasm. It catalyses the reaction guanosine(37) in tRNA + S-adenosyl-L-methionine = N(1)-methylguanosine(37) in tRNA + S-adenosyl-L-homocysteine + H(+). Functionally, specifically methylates guanosine-37 in various tRNAs. This chain is tRNA (guanine-N(1)-)-methyltransferase, found in Metamycoplasma arthritidis (strain 158L3-1) (Mycoplasma arthritidis).